We begin with the raw amino-acid sequence, 78 residues long: MRPIIEFCLSNLASGTQKAMEELEKDPNLDIIEYGCLSHCGSCANDKFALVNGEYVSGETNEQLVENIYHYLDENPMF.

This sequence belongs to the UPF0349 family.

The chain is UPF0349 protein BH3414 from Halalkalibacterium halodurans (strain ATCC BAA-125 / DSM 18197 / FERM 7344 / JCM 9153 / C-125) (Bacillus halodurans).